The primary structure comprises 390 residues: Succinate--CoA ligase [ADP-forming] subunit beta (390 aa).

The ATP-grasp domain maps to 9-248; it reads KEILRRHKAN…ITEEDPLEVQ (240 aa). ATP is bound by residues Lys-50, 57–59, Glu-103, Ile-106, and Glu-111; that span reads GRG. 2 residues coordinate Mg(2+): Asn-203 and Asp-217. Residues Asn-268 and 325 to 327 each bind substrate; that span reads GIV.

It belongs to the succinate/malate CoA ligase beta subunit family. As to quaternary structure, heterotetramer of two alpha and two beta subunits. The cofactor is Mg(2+).

The catalysed reaction is succinate + ATP + CoA = succinyl-CoA + ADP + phosphate. It carries out the reaction GTP + succinate + CoA = succinyl-CoA + GDP + phosphate. Its pathway is carbohydrate metabolism; tricarboxylic acid cycle; succinate from succinyl-CoA (ligase route): step 1/1. Functionally, succinyl-CoA synthetase functions in the citric acid cycle (TCA), coupling the hydrolysis of succinyl-CoA to the synthesis of either ATP or GTP and thus represents the only step of substrate-level phosphorylation in the TCA. The beta subunit provides nucleotide specificity of the enzyme and binds the substrate succinate, while the binding sites for coenzyme A and phosphate are found in the alpha subunit. In Leptospira interrogans serogroup Icterohaemorrhagiae serovar copenhageni (strain Fiocruz L1-130), this protein is Succinate--CoA ligase [ADP-forming] subunit beta.